We begin with the raw amino-acid sequence, 156 residues long: Flagellar assembly factor FliW (156 aa).

It belongs to the FliW family. As to quaternary structure, interacts with translational regulator CsrA and flagellin(s).

It is found in the cytoplasm. Its function is as follows. Acts as an anti-CsrA protein, binds CsrA and prevents it from repressing translation of its target genes, one of which is flagellin. Binds to flagellin and participates in the assembly of the flagellum. This is Flagellar assembly factor FliW from Pseudothermotoga lettingae (strain ATCC BAA-301 / DSM 14385 / NBRC 107922 / TMO) (Thermotoga lettingae).